The following is a 229-amino-acid chain: 23 kDa piroplasm membrane protein (229 aa).

The N-terminal stretch at M1–S19 is a signal peptide. Over S20–Y203 the chain is Extracellular. A helical transmembrane segment spans residues V204–V224. At K225–K229 the chain is on the cytoplasmic side.

It localises to the membrane. This chain is 23 kDa piroplasm membrane protein, found in Theileria annulata.